A 602-amino-acid chain; its full sequence is MTAPDAPFDARAFLRTVPEEPGVYRMIGADERVLYVGKAKNLKRRVSSYFQRTQPSPRIAMMVAQILRVDITPTRSEAEALLLENNLIKSLAPRYNILFRDDKTYPYIELSGDEFPRLAYHRGAFTKGARYFGPFPNVWAVRESIHLLQKTFRLRTCENPVFQNRSRPCLLHQIKRCTAPCVGLIDKEAYAADVRLAARFLEGRASEVIDDLTARMHAAAERLAFEEAAACRDQVRVLQAVLARQFVDSRKDEDVDIIAAVEEGSVTCVNIAMVRGGRHLGDRPQFPSATAGIGMLDAALAFIEQHYREHELPAKLLVDVPLAPVRVLMDEICDKPCTLLVPRLQAEKVWMGMAENNARLAIIARARDTGRAEMRLEALRETLDLAEAPRRIECFDISHTMGEATVASCVVSVDGAMKNSEYRRYNITGITPGDDFAAMRQVLERRYGKVAAGEGVCPDLILIDGGKGQVSSARSVLADVGLESIAMVGVAKGEERKPGLETLVFPDGRMQNLAIDHPALHLIQEIRDEAHRFAITGHRARRAKARIGSRLEDIPGIGPMRRRNLLASFGGLDGVRAATVEDLCRVGGVSRKTAEAIYNALH.

The GIY-YIG domain maps to 19-97 (EEPGVYRMIG…IKSLAPRYNI (79 aa)). Residues 206 to 241 (SEVIDDLTARMHAAAERLAFEEAAACRDQVRVLQAV) enclose the UVR domain.

Belongs to the UvrC family. In terms of assembly, interacts with UvrB in an incision complex.

The protein localises to the cytoplasm. The UvrABC repair system catalyzes the recognition and processing of DNA lesions. UvrC both incises the 5' and 3' sides of the lesion. The N-terminal half is responsible for the 3' incision and the C-terminal half is responsible for the 5' incision. In Aromatoleum aromaticum (strain DSM 19018 / LMG 30748 / EbN1) (Azoarcus sp. (strain EbN1)), this protein is UvrABC system protein C.